The primary structure comprises 273 residues: Dermonecrotic toxin LapSicTox-alphaIB1aiii (273 aa).

His-5 is an active-site residue. Positions 25 and 27 each coordinate Mg(2+). His-41 functions as the Nucleophile in the catalytic mechanism. Disulfide bonds link Cys-45/Cys-51 and Cys-47/Cys-190. Asp-85 is a Mg(2+) binding site. Asn-250 carries an N-linked (GlcNAc...) asparagine glycan.

It belongs to the arthropod phospholipase D family. Class II subfamily. It depends on Mg(2+) as a cofactor. As to expression, expressed by the venom gland.

It is found in the secreted. The catalysed reaction is an N-(acyl)-sphingosylphosphocholine = an N-(acyl)-sphingosyl-1,3-cyclic phosphate + choline. It catalyses the reaction an N-(acyl)-sphingosylphosphoethanolamine = an N-(acyl)-sphingosyl-1,3-cyclic phosphate + ethanolamine. The enzyme catalyses a 1-acyl-sn-glycero-3-phosphocholine = a 1-acyl-sn-glycero-2,3-cyclic phosphate + choline. It carries out the reaction a 1-acyl-sn-glycero-3-phosphoethanolamine = a 1-acyl-sn-glycero-2,3-cyclic phosphate + ethanolamine. In terms of biological role, dermonecrotic toxins cleave the phosphodiester linkage between the phosphate and headgroup of certain phospholipids (sphingolipid and lysolipid substrates), forming an alcohol (often choline) and a cyclic phosphate. This toxin acts on sphingomyelin (SM). It may also act on ceramide phosphoethanolamine (CPE), lysophosphatidylcholine (LPC) and lysophosphatidylethanolamine (LPE), but not on lysophosphatidylserine (LPS), and lysophosphatidylglycerol (LPG). It acts by transphosphatidylation, releasing exclusively cyclic phosphate products as second products. Induces dermonecrosis, hemolysis, increased vascular permeability, edema, inflammatory response, and platelet aggregation. This is Dermonecrotic toxin LapSicTox-alphaIB1aiii from Loxosceles apachea (Apache recluse spider).